A 211-amino-acid polypeptide reads, in one-letter code: Hypoxanthine-guanine phosphoribosyltransferase (211 aa).

The disordered stretch occupies residues 1-20 (MSNSAKSPSGPVGDEGRRNY). Residues lysine 66, 125–133 (EDIVDSAIT), lysine 157, and aspartate 185 contribute to the GMP site. The active-site Proton acceptor is aspartate 129. Aspartate 185 lines the Mg(2+) pocket.

Belongs to the purine/pyrimidine phosphoribosyltransferase family. Requires Mg(2+) as cofactor.

Its subcellular location is the cytoplasm. It carries out the reaction IMP + diphosphate = hypoxanthine + 5-phospho-alpha-D-ribose 1-diphosphate. The catalysed reaction is GMP + diphosphate = guanine + 5-phospho-alpha-D-ribose 1-diphosphate. It participates in purine metabolism; IMP biosynthesis via salvage pathway; IMP from hypoxanthine: step 1/1. Converts guanine to guanosine monophosphate, and hypoxanthine to inosine monophosphate. Transfers the 5-phosphoribosyl group from 5-phosphoribosylpyrophosphate onto the purine. Plays a central role in the generation of purine nucleotides through the purine salvage pathway. This is Hypoxanthine-guanine phosphoribosyltransferase from Leishmania donovani.